The following is a 191-amino-acid chain: Peptidyl-tRNA hydrolase (191 aa).

Tyr-17 lines the tRNA pocket. His-22 (proton acceptor) is an active-site residue. Residues Tyr-68, Asn-70, and Asn-116 each coordinate tRNA.

This sequence belongs to the PTH family. As to quaternary structure, monomer.

Its subcellular location is the cytoplasm. It carries out the reaction an N-acyl-L-alpha-aminoacyl-tRNA + H2O = an N-acyl-L-amino acid + a tRNA + H(+). Functionally, hydrolyzes ribosome-free peptidyl-tRNAs (with 1 or more amino acids incorporated), which drop off the ribosome during protein synthesis, or as a result of ribosome stalling. In terms of biological role, catalyzes the release of premature peptidyl moieties from peptidyl-tRNA molecules trapped in stalled 50S ribosomal subunits, and thus maintains levels of free tRNAs and 50S ribosomes. This chain is Peptidyl-tRNA hydrolase, found in Mycobacterium ulcerans (strain Agy99).